Consider the following 469-residue polypeptide: Dihydrolipoyl dehydrogenase (469 aa).

Residues 40 to 48 (EKAVLGGVC), lysine 57, and alanine 120 contribute to the FAD site. A disulfide bridge connects residues cysteine 48 and cysteine 53. NAD(+) contacts are provided by residues 186–190 (GGGAI), glutamate 209, and 275–278 (AVGV). FAD is bound by residues aspartate 317 and alanine 325. Catalysis depends on histidine 450, which acts as the Proton acceptor.

This sequence belongs to the class-I pyridine nucleotide-disulfide oxidoreductase family. As to quaternary structure, homodimer. It depends on FAD as a cofactor.

The protein localises to the cytoplasm. It catalyses the reaction N(6)-[(R)-dihydrolipoyl]-L-lysyl-[protein] + NAD(+) = N(6)-[(R)-lipoyl]-L-lysyl-[protein] + NADH + H(+). Lipoamide dehydrogenase is a component of the alpha-ketoacid dehydrogenase complexes. The polypeptide is Dihydrolipoyl dehydrogenase (lpd) (Chlorobaculum tepidum (strain ATCC 49652 / DSM 12025 / NBRC 103806 / TLS) (Chlorobium tepidum)).